We begin with the raw amino-acid sequence, 341 residues long: Guanine nucleotide-binding protein subunit beta (341 aa).

WD repeat units follow at residues G54–A93, L96–R135, G142–A180, G183–T222, G225–M264, N269–V308, and G311–N341.

This sequence belongs to the WD repeat G protein beta family. G proteins are composed of 3 units, alpha, beta and gamma. The G protein beta1-gamma2 dimer interacts with calmodulin. Abundantly expressed in gills, gonad and mantle and at lower levels in digestion gland. Not detected in muscle.

Its subcellular location is the cytoplasm. Guanine nucleotide-binding proteins (G proteins) are involved as a modulator or transducer in various transmembrane signaling systems. The beta and gamma chains are required for the GTPase activity, for replacement of GDP by GTP, and for G protein-effector interaction. The polypeptide is Guanine nucleotide-binding protein subunit beta (Pinctada fucata (Akoya pearl oyster)).